Reading from the N-terminus, the 162-residue chain is Globin CTT-VIIB-7 (162 aa).

The first 16 residues, M1–A16, serve as a signal peptide directing secretion. The Globin domain occupies P18–E162. 2 residues coordinate heme b: H76 and H111.

The protein belongs to the globin family. Homodimer.

This Chironomus thummi piger (Midge) protein is Globin CTT-VIIB-7 (CTT-7B7).